The following is a 351-amino-acid chain: MSISSLSRKNIQALTPYQSARRLGGKGDIWLNANEYPTSPDFNLTHRTFNRYPEPQPQAVIEGYANYVGVTPENVLVSRGGDESIELIIRAFCEAEDSILYCPPTYGMYAVSAETCGIALKTVPLTADFQLNLPEIERQLTGVKVVFVCSPNNPTGTLVNRTDLLALLEMTRNKAIVVVDEAYIEFCPQATMVTELKNYPHLAIIRTLSKAFALAGLRCGFTLANKDLIEVLQKVIAPYPLPVPVADLAAQALQPAGLQAMQQRVQEILQNRTALEADLRSLPCVENVFQSDGNYLLVKFKDGQKIFKTLWDQGIILRNQHSALMLENCIRITIGTAEENRRVIEAIRKIA.

Lys-210 is subject to N6-(pyridoxal phosphate)lysine.

It belongs to the class-II pyridoxal-phosphate-dependent aminotransferase family. Histidinol-phosphate aminotransferase subfamily. Homodimer. Requires pyridoxal 5'-phosphate as cofactor.

The enzyme catalyses L-histidinol phosphate + 2-oxoglutarate = 3-(imidazol-4-yl)-2-oxopropyl phosphate + L-glutamate. Its pathway is amino-acid biosynthesis; L-histidine biosynthesis; L-histidine from 5-phospho-alpha-D-ribose 1-diphosphate: step 7/9. The sequence is that of Histidinol-phosphate aminotransferase 1 (hisC1) from Pasteurella multocida (strain Pm70).